We begin with the raw amino-acid sequence, 371 residues long: Cell division control protein 3 (371 aa).

One can recognise a Septin-type G domain in the interval 22–307 (AGIDFNIMTV…DEYKTREIGL (286 aa)). The G1 motif stretch occupies residues 32 to 39 (GSNGLGKS). GTP-binding positions include 32–39 (GSNGLGKS), G116, 195–203 (KSDLLSDSE), and R257. The interval 113-116 (EVDG) is G3 motif. The segment at 194 to 197 (GKSD) is G4 motif.

This sequence belongs to the TRAFAC class TrmE-Era-EngA-EngB-Septin-like GTPase superfamily. Septin GTPase family. Component of the septin complex.

Its function is as follows. Septins are GTPases involved in cytokinesis. The septins localize to the site of cleavage and act as a structural scaffold that recruits different components involved in diverse processes at specific stages during the cell cycle. Septins are also involved in cell morphogenesis, chitin deposition, cell cycle regulation, cell compartmentalization and spore wall formation. The chain is Cell division control protein 3 (CDC3) from Encephalitozoon cuniculi (strain GB-M1) (Microsporidian parasite).